A 365-amino-acid chain; its full sequence is Putrescine carbamoyltransferase (365 aa).

Carbamoyl phosphate-binding positions include 54–58 (STRTR), Arg105, and His132. Residue 277–280 (HCLP) coordinates putrescine.

The protein belongs to the aspartate/ornithine carbamoyltransferase superfamily. PTCase family. In terms of assembly, homotrimer.

The protein resides in the cytoplasm. The catalysed reaction is carbamoyl phosphate + putrescine = N-carbamoylputrescine + phosphate + H(+). It participates in amine and polyamine biosynthesis; putrescine biosynthesis via agmatine pathway; putrescine from N-carbamoylputrescine (transferase route): step 1/1. Functionally, catalyzes the phosphorolysis of N-carbamoylputrescine to form carbamoyl phosphate and putrescine. Is involved in the degradation pathway of the polyamine agmatine. The protein is Putrescine carbamoyltransferase of Mycoplasma capricolum subsp. capricolum (strain California kid / ATCC 27343 / NCTC 10154).